A 729-amino-acid chain; its full sequence is Rho GTPase-activating protein 28 (729 aa).

2 disordered regions span residues A20–K42 and S55–T105. The span at S65–S75 shows a compositional bias: polar residues. S72 carries the post-translational modification Phosphoserine. Residues D80 to K89 show a composition bias toward basic and acidic residues. The residue at position 159 (T159) is a Phosphothreonine. The disordered stretch occupies residues G176–V236. Over residues G195–R204 the composition is skewed to basic and acidic residues. Over residues S217–A226 the composition is skewed to polar residues. The region spanning V380 to W577 is the Rho-GAP domain. The interval T612–S631 is disordered. Residues S619 to P630 show a composition bias toward polar residues.

Expressed in testis. Expressed at moderate level in kidney and ovary, and weakly expressed in spleen and skeletal muscle.

In terms of biological role, GTPase activator for the Rho-type GTPases by converting them to an inactive GDP-bound state. This Homo sapiens (Human) protein is Rho GTPase-activating protein 28 (ARHGAP28).